The chain runs to 462 residues: GTPase Der (462 aa).

EngA-type G domains lie at 3–166 (PVIA…TTET) and 175–348 (IKIA…HSAI). GTP is bound by residues 9-16 (GRPNVGKS), 56-60 (DTGGI), 118-121 (NKTD), 181-188 (GRPNVGKS), 228-232 (DTAGV), and 293-296 (NKWD). Residues 349–433 (QSFSTPKLTR…PLKIEFKGGQ (85 aa)) form the KH-like domain.

Belongs to the TRAFAC class TrmE-Era-EngA-EngB-Septin-like GTPase superfamily. EngA (Der) GTPase family. In terms of assembly, associates with the 50S ribosomal subunit.

In terms of biological role, GTPase that plays an essential role in the late steps of ribosome biogenesis. The polypeptide is GTPase Der (Legionella pneumophila (strain Paris)).